The following is an 81-amino-acid chain: Photosystem I iron-sulfur center (81 aa).

2 4Fe-4S ferredoxin-type domains span residues Ala-2–Trp-31 and Met-39–Tyr-68. Positions 11, 14, 17, 21, 48, 51, 54, and 58 each coordinate [4Fe-4S] cluster.

As to quaternary structure, the eukaryotic PSI reaction center is composed of at least 11 subunits. Requires [4Fe-4S] cluster as cofactor.

Its subcellular location is the plastid. The protein resides in the chloroplast thylakoid membrane. It catalyses the reaction reduced [plastocyanin] + hnu + oxidized [2Fe-2S]-[ferredoxin] = oxidized [plastocyanin] + reduced [2Fe-2S]-[ferredoxin]. In terms of biological role, apoprotein for the two 4Fe-4S centers FA and FB of photosystem I (PSI); essential for photochemical activity. FB is the terminal electron acceptor of PSI, donating electrons to ferredoxin. The C-terminus interacts with PsaA/B/D and helps assemble the protein into the PSI complex. Required for binding of PsaD and PsaE to PSI. PSI is a plastocyanin/cytochrome c6-ferredoxin oxidoreductase, converting photonic excitation into a charge separation, which transfers an electron from the donor P700 chlorophyll pair to the spectroscopically characterized acceptors A0, A1, FX, FA and FB in turn. The protein is Photosystem I iron-sulfur center of Chlamydomonas reinhardtii (Chlamydomonas smithii).